The primary structure comprises 785 residues: Conidiophore development regulator abaA (785 aa).

The tract at residues 1–22 (MAEWQTECMLPPTQPGFEGVGP) is disordered. A DNA-binding region (TEA) is located at residues 130-204 (GKDGEPVWSD…QVLDSFLKGD (75 aa)). The interval 213-232 (EQPADRSNGQPPSAGPRWRN) is disordered.

It belongs to the TEC1 family.

Its subcellular location is the nucleus. BrlA, abaA and wetA are pivotal regulators of conidiophore development and conidium maturation. They act individually and together to regulate their own expression and that of numerous other sporulation-specific genes. Binds to the sequence 5'-CATTCY-3', where Y is a pyrimidine, making both major- and minor-groove contacts. Controls expression of wetA. The polypeptide is Conidiophore development regulator abaA (Aspergillus oryzae (strain ATCC 42149 / RIB 40) (Yellow koji mold)).